The sequence spans 247 residues: Acetate transporter protein patA (247 aa).

The N-linked (GlcNAc...) asparagine glycan is linked to Asn20. 6 consecutive transmembrane segments (helical) span residues 37 to 57 (PPITPIGSPTALGMGAFAIAF), 71 to 91 (AITNAYIGNCFFTAGLGLVLV), 106 to 126 (VFGGFGLFNLAFGAINAPAFG), 141 to 161 (ALGYFLLVWGVFVLFFTIAAM), 169 to 189 (AMLGTSQITYTLLAASYFAMA), and 202 to 222 (AAGAFGFVSGLLAWYVVAHLM).

It belongs to the acetate uptake transporter (AceTr) (TC 2.A.96) family.

Its subcellular location is the endoplasmic reticulum membrane. Its pathway is mycotoxin biosynthesis; patulin biosynthesis. Acetate transporter protein; part of the gene cluster that mediates the biosynthesis of patulin, an acetate-derived tetraketide mycotoxin produced by several fungal species that shows antimicrobial properties against several bacteria. May be involved in the uptake of acetate, a substrate for the synthesis of 6-methylsalicylic acid by the polyketide synthase patK. The chain is Acetate transporter protein patA from Aspergillus clavatus (strain ATCC 1007 / CBS 513.65 / DSM 816 / NCTC 3887 / NRRL 1 / QM 1276 / 107).